The following is a 341-amino-acid chain: S-adenosylmethionine:tRNA ribosyltransferase-isomerase (341 aa).

It belongs to the QueA family. As to quaternary structure, monomer.

The protein localises to the cytoplasm. It carries out the reaction 7-aminomethyl-7-carbaguanosine(34) in tRNA + S-adenosyl-L-methionine = epoxyqueuosine(34) in tRNA + adenine + L-methionine + 2 H(+). It functions in the pathway tRNA modification; tRNA-queuosine biosynthesis. Functionally, transfers and isomerizes the ribose moiety from AdoMet to the 7-aminomethyl group of 7-deazaguanine (preQ1-tRNA) to give epoxyqueuosine (oQ-tRNA). This is S-adenosylmethionine:tRNA ribosyltransferase-isomerase from Acetivibrio thermocellus (strain ATCC 27405 / DSM 1237 / JCM 9322 / NBRC 103400 / NCIMB 10682 / NRRL B-4536 / VPI 7372) (Clostridium thermocellum).